The chain runs to 325 residues: Tagatose 1,6-diphosphate aldolase (325 aa).

This sequence belongs to the aldolase LacD family.

The catalysed reaction is D-tagatofuranose 1,6-bisphosphate = D-glyceraldehyde 3-phosphate + dihydroxyacetone phosphate. Its pathway is carbohydrate metabolism; D-tagatose 6-phosphate degradation; D-glyceraldehyde 3-phosphate and glycerone phosphate from D-tagatose 6-phosphate: step 2/2. The chain is Tagatose 1,6-diphosphate aldolase from Staphylococcus epidermidis (strain ATCC 12228 / FDA PCI 1200).